Reading from the N-terminus, the 313-residue chain is Probable cytochrome c oxidase subunit 2 (313 aa).

Positions 5 to 51 constitute an RPE1 insert domain; it reads RYWSKQSYKKLKVDQEHNTTEYTNVCNSTSLGSTYTLPLKMELWKIY. The next 3 membrane-spanning stretches (helical) occupy residues 39–59, 94–114, and 131–151; these read YTLP…YFLI, LLYI…FVCI, and LLIE…IAVP. 4 residues coordinate Cu cation: H233, C268, C272, and H276.

The protein belongs to the cytochrome c oxidase subunit 2 family. Cu cation serves as cofactor. Heme is required as a cofactor.

Its subcellular location is the cell membrane. It carries out the reaction 4 Fe(II)-[cytochrome c] + O2 + 8 H(+)(in) = 4 Fe(III)-[cytochrome c] + 2 H2O + 4 H(+)(out). Functionally, subunits I and II form the functional core of the enzyme complex. Electrons originating in cytochrome c are transferred via heme a and Cu(A) to the binuclear center formed by heme a3 and Cu(B). In Rickettsia prowazekii (strain Madrid E), this protein is Probable cytochrome c oxidase subunit 2 (ctaC).